We begin with the raw amino-acid sequence, 270 residues long: Tryptophan synthase alpha chain (270 aa).

Catalysis depends on proton acceptor residues E49 and D60.

The protein belongs to the TrpA family. Tetramer of two alpha and two beta chains.

The enzyme catalyses (1S,2R)-1-C-(indol-3-yl)glycerol 3-phosphate + L-serine = D-glyceraldehyde 3-phosphate + L-tryptophan + H2O. It participates in amino-acid biosynthesis; L-tryptophan biosynthesis; L-tryptophan from chorismate: step 5/5. Functionally, the alpha subunit is responsible for the aldol cleavage of indoleglycerol phosphate to indole and glyceraldehyde 3-phosphate. In Buchnera aphidicola subsp. Melaphis rhois, this protein is Tryptophan synthase alpha chain.